The following is a 108-amino-acid chain: Ribonuclease P protein component 4 (108 aa).

4 residues coordinate Zn(2+): cysteine 60, cysteine 63, cysteine 86, and cysteine 89.

This sequence belongs to the eukaryotic/archaeal RNase P protein component 4 family. As to quaternary structure, consists of a catalytic RNA component and at least 4-5 protein subunits. It depends on Zn(2+) as a cofactor.

It is found in the cytoplasm. It catalyses the reaction Endonucleolytic cleavage of RNA, removing 5'-extranucleotides from tRNA precursor.. Functionally, part of ribonuclease P, a protein complex that generates mature tRNA molecules by cleaving their 5'-ends. The sequence is that of Ribonuclease P protein component 4 from Sulfurisphaera tokodaii (strain DSM 16993 / JCM 10545 / NBRC 100140 / 7) (Sulfolobus tokodaii).